Reading from the N-terminus, the 370-residue chain is 3-isopropylmalate dehydrogenase (370 aa).

Position 77-90 (77-90 (GPKWDSVPYEVRPE)) interacts with NAD(+). 4 residues coordinate substrate: R97, R107, R135, and D226. Residues D226, D250, and D254 each coordinate Mg(2+). An NAD(+)-binding site is contributed by 290–302 (GSAPDIAGKGIAN).

Belongs to the isocitrate and isopropylmalate dehydrogenases family. LeuB type 1 subfamily. Homodimer. Requires Mg(2+) as cofactor. It depends on Mn(2+) as a cofactor.

It is found in the cytoplasm. It carries out the reaction (2R,3S)-3-isopropylmalate + NAD(+) = 4-methyl-2-oxopentanoate + CO2 + NADH. It functions in the pathway amino-acid biosynthesis; L-leucine biosynthesis; L-leucine from 3-methyl-2-oxobutanoate: step 3/4. In terms of biological role, catalyzes the oxidation of 3-carboxy-2-hydroxy-4-methylpentanoate (3-isopropylmalate) to 3-carboxy-4-methyl-2-oxopentanoate. The product decarboxylates to 4-methyl-2 oxopentanoate. This Rhizobium etli (strain ATCC 51251 / DSM 11541 / JCM 21823 / NBRC 15573 / CFN 42) protein is 3-isopropylmalate dehydrogenase.